The sequence spans 555 residues: Inorganic phosphate transporter 1-11 (555 aa).

Over 1-28 (MADADGGSNLAVLDALDSARTQMYHMKA) the chain is Cytoplasmic. The helical transmembrane segment at 29–49 (IVIAGMGFFTDAYDLFCISTV) threads the bilayer. Over 50-77 (SKLLGRLYYQPDGSTDSKPGALSKTANN) the chain is Extracellular. Residues 78–98 (MVIGVALVGTLMGQLVFGYFG) form a helical membrane-spanning segment. Topologically, residues 99-105 (DKLGRKR) are cytoplasmic. Residues 106 to 126 (VYGVTLILMAACAIGSGLSFG) form a helical membrane-spanning segment. Residues 127-130 (SSRK) lie on the Extracellular side of the membrane. The helical transmembrane segment at 131-151 (AVIGTLCFFRFWLGFGIGGDY) threads the bilayer. Over 152-167 (PLSATIMSEYSNKKTR) the chain is Cytoplasmic. Residues 168-188 (GAFIAAVFAMQGVGIIFAGLV) traverse the membrane as a helical segment. Residues 189 to 216 (SMIVSSIFLTYNKAPSYKGNHDLSRQMP) lie on the Extracellular side of the membrane. A helical transmembrane segment spans residues 217–237 (AADYVWRIVLMIGAFPALATF). Residues 238–298 (YWRMKMPETA…PLLSMEFARR (61 aa)) lie on the Cytoplasmic side of the membrane. Residues 299-319 (HGLHLIGTTTTWFLLDIAFYS) traverse the membrane as a helical segment. The Extracellular segment spans residues 320 to 351 (QNLTQKDIFPAMGLISGAAEVNALTEMFQISK). The helical transmembrane segment at 352–372 (ASFLVALLGTFPGYWVTVALI) threads the bilayer. Residues 373 to 377 (DKMGR) are Cytoplasmic-facing. Residues 378-398 (YMIQLIGFFMMSMFMLAMGIL) traverse the membrane as a helical segment. The Extracellular segment spans residues 399–408 (YDYLKTHHFL). A helical transmembrane segment spans residues 409–436 (FGLLYALTFFFANFGPNSTTFVLPAELF). Topologically, residues 437–442 (PTRVRS) are cytoplasmic. Residues 443–463 (TCHAISAAAGKAGAIVAAFGI) form a helical membrane-spanning segment. The Extracellular portion of the chain corresponds to 464–477 (QKLTYNSQVKSIKK). The helical transmembrane segment at 478-498 (ALIILSITNMLGFFFTFLVPE) threads the bilayer. At 499–555 (TMGRSLEEISGEDGNTGAGGGGAPAAANAGVGVSASDVSRDEKFPASSTEWQTSMHA) the chain is on the cytoplasmic side. The disordered stretch occupies residues 506 to 555 (EISGEDGNTGAGGGGAPAAANAGVGVSASDVSRDEKFPASSTEWQTSMHA). Gly residues predominate over residues 512-521 (GNTGAGGGGA). Residues 522–535 (PAAANAGVGVSASD) show a composition bias toward low complexity. The segment covering 544 to 555 (ASSTEWQTSMHA) has biased composition (polar residues).

The protein belongs to the major facilitator superfamily. Phosphate:H(+) symporter (TC 2.A.1.9) family.

The protein resides in the membrane. Its function is as follows. Symbiosis-specific regulated inorganic phosphate (Pi) transporter. Probably involved in symbiosis-mediated Pi uptake in roots colonized by myccorhizal fungi. This is Inorganic phosphate transporter 1-11 (PHT1-11) from Oryza sativa subsp. japonica (Rice).